The chain runs to 156 residues: Transcription antitermination protein NusB (156 aa).

It belongs to the NusB family.

Functionally, involved in transcription antitermination. Required for transcription of ribosomal RNA (rRNA) genes. Binds specifically to the boxA antiterminator sequence of the ribosomal RNA (rrn) operons. The chain is Transcription antitermination protein NusB from Mycobacterium bovis (strain ATCC BAA-935 / AF2122/97).